The sequence spans 21 residues: Nucleoside diphosphate kinase (21 aa).

H4 serves as the catalytic Pros-phosphohistidine intermediate.

This sequence belongs to the NDK family. As to quaternary structure, homohexamer. The cofactor is Mg(2+).

It is found in the cytoplasm. It catalyses the reaction a 2'-deoxyribonucleoside 5'-diphosphate + ATP = a 2'-deoxyribonucleoside 5'-triphosphate + ADP. The enzyme catalyses a ribonucleoside 5'-diphosphate + ATP = a ribonucleoside 5'-triphosphate + ADP. Major role in the synthesis of nucleoside triphosphates other than ATP. The ATP gamma phosphate is transferred to the NDP beta phosphate via a ping-pong mechanism, using a phosphorylated active-site intermediate. The polypeptide is Nucleoside diphosphate kinase (NDK1) (Candida albicans (Yeast)).